Consider the following 616-residue polypeptide: D-glutamate cyclase, mitochondrial (616 aa).

The N-terminal 28 residues, 1–28, are a transit peptide targeting the mitochondrion; the sequence is MPFTLHLRSRLPSAIRSLILQKKPNIRN.

Belongs to the D-glutamate cyclase family.

The protein resides in the mitochondrion matrix. The catalysed reaction is D-glutamate = 5-oxo-D-proline + H2O. Its function is as follows. D-glutamate cyclase that converts D-glutamate to 5-oxo-D-proline. This is D-glutamate cyclase, mitochondrial from Homo sapiens (Human).